The following is a 356-amino-acid chain: Inositol monophosphatase 3 (356 aa).

Residues 11-31 (LGIGVFCLLGLGVLYHVYSGF) form a helical membrane-spanning segment. Glu-127, Asp-167, Leu-169, Asp-170, and Asp-293 together coordinate Mg(2+). Glu-127 is a substrate binding site. Residues 169-172 (LDAT) and Asp-293 each bind substrate.

It belongs to the inositol monophosphatase superfamily. Mg(2+) is required as a cofactor.

It is found in the membrane. It carries out the reaction a myo-inositol phosphate + H2O = myo-inositol + phosphate. Its pathway is polyol metabolism; myo-inositol biosynthesis; myo-inositol from D-glucose 6-phosphate: step 2/2. The polypeptide is Inositol monophosphatase 3 (bpnt2) (Xenopus tropicalis (Western clawed frog)).